The primary structure comprises 385 residues: ADP,ATP carrier protein 2, mitochondrial (385 aa).

The N-terminal 74 residues, 1-74 (MVEQTQHPTI…ATTTSPVFVQ (74 aa)), are a transit peptide targeting the mitochondrion. 3 Solcar repeats span residues 82 to 175 (TNFA…FKRL), 187 to 280 (KWFA…VKPV), and 288 to 374 (DSFF…LQLI). A run of 5 helical transmembrane segments spans residues 84-111 (FAID…VKLL), 152-176 (TANV…KRLF), 185-205 (YWKW…SSLL), 256-277 (FNIS…YDSV), and 291-311 (FASF…SYPI). 2 residues coordinate ADP: Arg-157 and Lys-169. ADP is bound at residue Arg-315. Positions 315–320 (RRRMMM) are important for transport activity. A Nucleotide carrier signature motif motif is present at residues 315-320 (RRRMMM). The chain crosses the membrane as a helical span at residues 351 to 371 (AGANILRAVAGAGVLAGYDKL).

It belongs to the mitochondrial carrier (TC 2.A.29) family. As to quaternary structure, monomer.

It localises to the mitochondrion inner membrane. The catalysed reaction is ADP(in) + ATP(out) = ADP(out) + ATP(in). The matrix-open state (m-state) is inhibited by the membrane-permeable bongkrekic acid (BKA). The cytoplasmic-open state (c-state) is inhibited by the membrane-impermeable toxic inhibitor carboxyatractyloside (CATR). ADP:ATP antiporter that mediates import of ADP into the mitochondrial matrix for ATP synthesis, and export of ATP out to fuel the cell. Cycles between the cytoplasmic-open state (c-state) and the matrix-open state (m-state): operates by the alternating access mechanism with a single substrate-binding site intermittently exposed to either the cytosolic (c-state) or matrix (m-state) side of the inner mitochondrial membrane. This Arabidopsis thaliana (Mouse-ear cress) protein is ADP,ATP carrier protein 2, mitochondrial (AAC2).